Consider the following 445-residue polypeptide: Phosphoglucosamine mutase (445 aa).

Ser102 functions as the Phosphoserine intermediate in the catalytic mechanism. Mg(2+)-binding residues include Ser102, Asp241, Asp243, and Asp245. Phosphoserine is present on Ser102.

The protein belongs to the phosphohexose mutase family. It depends on Mg(2+) as a cofactor. In terms of processing, activated by phosphorylation.

The enzyme catalyses alpha-D-glucosamine 1-phosphate = D-glucosamine 6-phosphate. Functionally, catalyzes the conversion of glucosamine-6-phosphate to glucosamine-1-phosphate. This chain is Phosphoglucosamine mutase, found in Shigella flexneri serotype 5b (strain 8401).